A 331-amino-acid chain; its full sequence is DNA-directed RNA polymerase subunit alpha (331 aa).

An alpha N-terminal domain (alpha-NTD) region spans residues 1 to 233 (MVREEIAVST…DLFLPFLHAE (233 aa)). An alpha C-terminal domain (alpha-CTD) region spans residues 268–331 (ALKRVFIDQS…GILQKRFAID (64 aa)).

It belongs to the RNA polymerase alpha chain family. In terms of assembly, in plastids the minimal PEP RNA polymerase catalytic core is composed of four subunits: alpha, beta, beta', and beta''. When a (nuclear-encoded) sigma factor is associated with the core the holoenzyme is formed, which can initiate transcription.

The protein localises to the plastid. Its subcellular location is the chloroplast. It catalyses the reaction RNA(n) + a ribonucleoside 5'-triphosphate = RNA(n+1) + diphosphate. DNA-dependent RNA polymerase catalyzes the transcription of DNA into RNA using the four ribonucleoside triphosphates as substrates. The polypeptide is DNA-directed RNA polymerase subunit alpha (Illicium oligandrum (Star anise)).